Reading from the N-terminus, the 223-residue chain is Ubiquitin carboxyl-terminal hydrolase isozyme L1 (223 aa).

Position 1 is an N-acetylmethionine (methionine 1). The UCH catalytic domain occupies 2-221 (QLKPMEINPE…VRFSAVALCK (220 aa)). Residues 5-10 (PMEINP) form an interaction with ubiquitin region. Catalysis depends on cysteine 90, which acts as the Nucleophile. At serine 125 the chain carries Phosphoserine. Histidine 161 serves as the catalytic Proton donor. Residues 211–216 (EVRFSA) are interaction with ubiquitin. A lipid anchor (S-farnesyl cysteine) is attached at cysteine 220. A propeptide spans 221–223 (KAA) (removed in mature form).

It belongs to the peptidase C12 family. As to quaternary structure, monomer. Homodimer. Interacts with COPS5 and SNCA. O-glycosylated.

The protein resides in the cytoplasm. Its subcellular location is the endoplasmic reticulum membrane. The enzyme catalyses Thiol-dependent hydrolysis of ester, thioester, amide, peptide and isopeptide bonds formed by the C-terminal Gly of ubiquitin (a 76-residue protein attached to proteins as an intracellular targeting signal).. Functionally, ubiquitin-protein hydrolase involved both in the processing of ubiquitin precursors and of ubiquitinated proteins. This enzyme is a thiol protease that recognizes and hydrolyzes a peptide bond at the C-terminal glycine of ubiquitin. Also binds to free monoubiquitin and may prevent its degradation in lysosomes. The homodimer may have ATP-independent ubiquitin ligase activity. The chain is Ubiquitin carboxyl-terminal hydrolase isozyme L1 (UCHL1) from Equus caballus (Horse).